A 360-amino-acid chain; its full sequence is Photosystem II protein D1 (360 aa).

The next 3 helical transmembrane spans lie at 29–46, 118–133, and 142–156; these read YVGW…TATT, HFLL…QWEL, and WICV…AATA. H118 lines the chlorophyll a pocket. Residue Y126 coordinates pheophytin a. [CaMn4O5] cluster is bound by residues D170 and E189. Residues 197 to 218 form a helical membrane-spanning segment; the sequence is FHMLGVAGVFGGSLFSAMHGSL. A chlorophyll a-binding site is contributed by H198. Residues H215 and 264-265 contribute to the a quinone site; that span reads SF. A Fe cation-binding site is contributed by H215. A Fe cation-binding site is contributed by H272. A helical transmembrane segment spans residues 274–288; it reads FLGAWPVIGIWFTAM. [CaMn4O5] cluster is bound by residues H332, E333, D342, and A344. The propeptide occupies 345–360; sequence SGEQAPVALTAPAING.

Belongs to the reaction center PufL/M/PsbA/D family. In terms of assembly, PSII is composed of 1 copy each of membrane proteins PsbA, PsbB, PsbC, PsbD, PsbE, PsbF, PsbH, PsbI, PsbJ, PsbK, PsbL, PsbM, PsbT, PsbX, PsbY, PsbZ, Psb30/Ycf12, peripheral proteins PsbO, CyanoQ (PsbQ), PsbU, PsbV and a large number of cofactors. It forms dimeric complexes. It depends on The D1/D2 heterodimer binds P680, chlorophylls that are the primary electron donor of PSII, and subsequent electron acceptors. It shares a non-heme iron and each subunit binds pheophytin, quinone, additional chlorophylls, carotenoids and lipids. D1 provides most of the ligands for the Mn4-Ca-O5 cluster of the oxygen-evolving complex (OEC). There is also a Cl(-1) ion associated with D1 and D2, which is required for oxygen evolution. The PSII complex binds additional chlorophylls, carotenoids and specific lipids. as a cofactor. Tyr-161 forms a radical intermediate that is referred to as redox-active TyrZ, YZ or Y-Z. Post-translationally, C-terminally processed by CtpA; processing is essential to allow assembly of the oxygen-evolving complex and thus photosynthetic growth.

It is found in the cellular thylakoid membrane. The enzyme catalyses 2 a plastoquinone + 4 hnu + 2 H2O = 2 a plastoquinol + O2. Photosystem II (PSII) is a light-driven water:plastoquinone oxidoreductase that uses light energy to abstract electrons from H(2)O, generating O(2) and a proton gradient subsequently used for ATP formation. It consists of a core antenna complex that captures photons, and an electron transfer chain that converts photonic excitation into a charge separation. The D1/D2 (PsbA/PsbD) reaction center heterodimer binds P680, the primary electron donor of PSII as well as several subsequent electron acceptors. The polypeptide is Photosystem II protein D1 (Microcystis aeruginosa).